A 769-amino-acid chain; its full sequence is METRPAERVFSNGDVYSGQLKGTLPHGKGKYAWPDGIIYEGDWEEGKISGRGKLMWSSGAKYEGDFSGGYLHGFGTLTSPDGSVYAGAWRMNVRHGLGRKEYCNSDVYDGSWREGLQDGSGSYSWYNGNRFIGNWKKGKMSGRGVMSWANGDLFNGFWLNGLRHGSGVYKYADGGFYFGTWSRGLKDGSGVFYPAGSKHPSLKKWHRHFGYDDTGNFLLSHNSTINIDDLRTSKAVSRSLSELTTTSGLTRTSERYPDDYWSTSDPPRDFMHHGPSSKSARSVDSGQSEIRDKNPIVFEREYMQGVLIKERIMSSIDMSHRARPLNLTKEVTVSACVSFLGGKWNHYLMLNLQLGIRYTVGKITPVPPREVRASDFSERARIMMFFPRNGSQYTPPHKSIDFDWKDYCPMVFRNLREMFKLDAADYMMSICGDDGLREISSPGKSGSIFYLSHDDRFVIKTLKRSELKVLLRMLPRYYEHVGDYENTLITKFFGVHRIKLKWGKKVRFVVMGNMFCTELKIHRRYDLKGSTQGRYTEKNKIGEKTTLKDLDLAYEFHMDKLLREALFKQIILDCSFLESLQILDYSLLLGLHFRAPDPLTDILEPPNEMSDQESDSVGSVDVNLPREPSIPPKGLLMVTHEPNSVNTAPGPHIRGSTLRAFSVGEKEVDLILPGTARLRVQLGVNMPAQAHHKLGQDNEESGTVELFEVYDVVVYMGIIDILQEYNMKKKVEHTCKSMKYDPMTISAIEPTLYSKRFIDFLLKVFPEKA.

8 MORN repeats span residues 16 to 38, 39 to 61, 62 to 84, 85 to 107, 108 to 130, 131 to 153, 154 to 176, and 177 to 198; these read YSGQ…DGII, YEGD…SGAK, YEGD…DGSV, YAGA…NSDV, YDGS…NGNR, FIGN…NGDL, FNGF…DGGF, and YFGT…AGSK. The tract at residues 266 to 289 is disordered; that stretch reads PPRDFMHHGPSSKSARSVDSGQSE. The span at 276–288 shows a compositional bias: polar residues; sequence SSKSARSVDSGQS. In terms of domain architecture, PIPK spans 344–765; that stretch reads WNHYLMLNLQ…RFIDFLLKVF (422 aa). The tract at residues 725-746 is activation loop; that stretch reads YNMKKKVEHTCKSMKYDPMTIS.

It catalyses the reaction a 1,2-diacyl-sn-glycero-3-phospho-(1D-myo-inositol 4-phosphate) + ATP = a 1,2-diacyl-sn-glycero-3-phospho-(1D-myo-inositol-4,5-bisphosphate) + ADP + H(+). The protein is Phosphatidylinositol 4-phosphate 5-kinase 8 (PIP5K8) of Arabidopsis thaliana (Mouse-ear cress).